A 290-amino-acid chain; its full sequence is F-box protein PP2-A13 (290 aa).

The region spanning 21-67 (RKLRLVDLPENCVALIMTRLDPPEICRLARLNRMFRRASSADFIWES) is the F-box domain.

Part of a SCF (ASK-cullin-F-box) protein ligase complex. Interacts with SKP1A/ASK1, SKP1B/ASK2, ASK5, ASK11 and ASK13.

The protein resides in the nucleus. It functions in the pathway protein modification; protein ubiquitination. Functionally, component of SCF(ASK-cullin-F-box) E3 ubiquitin ligase complexes, which may mediate the ubiquitination and subsequent proteasomal degradation of target proteins. In Arabidopsis thaliana (Mouse-ear cress), this protein is F-box protein PP2-A13 (PP2A13).